The sequence spans 850 residues: Bifunctional levopimaradiene synthase, chloroplastic (850 aa).

Residues 1–52 constitute a chloroplast transit peptide; it reads MALPSSSLSSQIHTGATTQCIPHFHGSLNAGTSAGKRRSLYLRWGKGPSKIV. Residue Lys250 coordinates substrate. Positions 383 and 385 each coordinate Mg(2+). The DXDD motif motif lies at 383–386; that stretch reads DIDD. Position 470 (Lys470) interacts with substrate. Asp602, Asp606, Asn746, Thr750, and Glu754 together coordinate Mg(2+). A DDXXD motif motif is present at residues 602 to 606; it reads DDLYD.

Belongs to the terpene synthase family. Tpsd subfamily. Mg(2+) is required as a cofactor.

Its subcellular location is the plastid. The protein localises to the chloroplast. The catalysed reaction is (2E,6E,10E)-geranylgeranyl diphosphate = (+)-copalyl diphosphate. The enzyme catalyses (+)-copalyl diphosphate = abieta-7,13-diene + diphosphate. It catalyses the reaction (+)-copalyl diphosphate = abieta-8(14),12-diene + diphosphate. It carries out the reaction (+)-copalyl diphosphate = neoabietadiene + diphosphate. The protein operates within terpene metabolism; oleoresin biosynthesis. Involved in defensive oleoresin formation in conifers in response to insect attack or other injury. Involved in diterpene (C20) olefins biosynthesis. Bifunctional enzyme that catalyzes two sequential cyclizations of geranylgeranyl diphosphate (GGPP) to levopimaradiene. Levopimaradiene is the major products of the enzyme with abietadiene and neoabietadiene. No activity with farnesyl diphosphate (FPP) as substrate. The chain is Bifunctional levopimaradiene synthase, chloroplastic from Pinus contorta (Shore pine).